The chain runs to 76 residues: DNA-directed RNA polymerase subunit Rpo10 (76 aa).

Residues Cys16, Cys19, Cys53, and Cys54 each contribute to the Zn(2+) site.

Belongs to the archaeal Rpo10/eukaryotic RPB10 RNA polymerase subunit family. Part of the RNA polymerase complex. Zn(2+) is required as a cofactor.

The protein localises to the cytoplasm. It carries out the reaction RNA(n) + a ribonucleoside 5'-triphosphate = RNA(n+1) + diphosphate. In terms of biological role, DNA-dependent RNA polymerase (RNAP) catalyzes the transcription of DNA into RNA using the four ribonucleoside triphosphates as substrates. This chain is DNA-directed RNA polymerase subunit Rpo10, found in Archaeoglobus fulgidus (strain ATCC 49558 / DSM 4304 / JCM 9628 / NBRC 100126 / VC-16).